We begin with the raw amino-acid sequence, 450 residues long: MLDINLFQVEKGGNPEIIRESQRKRGADVGVVDKVIEMYKEWVSLRFELDNTNKSINRVQKEIGLKMKAKEDASELLEEKNSLTERKKNLIEQETAKNKEMLNVVSSIGNIVHDSVPVSMDEDNNEIIRKWAPEGVTVEKKNCLSHHEVLTRLDGYDPERGVKVSGHRGYFLRQYGVFFNLALIQYGLDFLEKRGYIALQAPTMLNKDVMAKTAQLEQFDEELYKVIDGDEERYLIATSEQPISAYHSGEWFEKPSEQLPLKYAGYSTCYRREAGSHGRDAWGIFRVHAFEKIEQFVLTDPEKSWEAFTEMINHAEDFYKSLELPYRIVAIVSGALNNAAAKKYDLEAWFPFQGEYKELVSCSNCTDYQSRNLEIRCGVKKMGDREKKYVHCLNSTLCATERALCCILENYQTPDGVNVPKVLQPYMGGKTFLPFTKELPKNSTSKKGKN.

Position 238–240 (T238–E240) interacts with L-serine. ATP contacts are provided by residues R271–E273 and V287. E294 is an L-serine binding site. E358–S361 provides a ligand contact to ATP. An L-serine-binding site is contributed by T396.

It belongs to the class-II aminoacyl-tRNA synthetase family. Type-1 seryl-tRNA synthetase subfamily. Homodimer. The tRNA molecule binds across the dimer.

The protein localises to the cytoplasm. It is found in the cytosol. It catalyses the reaction tRNA(Ser) + L-serine + ATP = L-seryl-tRNA(Ser) + AMP + diphosphate + H(+). Catalyzes the attachment of serine to tRNA(Ser) in a two-step reaction: serine is first activated by ATP to form Ser-AMP and then transferred to the acceptor end of tRNA(Ser). The sequence is that of Serine--tRNA ligase, cytoplasmic from Schizosaccharomyces pombe (strain 972 / ATCC 24843) (Fission yeast).